A 183-amino-acid chain; its full sequence is Adenine phosphoribosyltransferase (183 aa).

Belongs to the purine/pyrimidine phosphoribosyltransferase family. In terms of assembly, homodimer.

The protein resides in the cytoplasm. The enzyme catalyses AMP + diphosphate = 5-phospho-alpha-D-ribose 1-diphosphate + adenine. Its pathway is purine metabolism; AMP biosynthesis via salvage pathway; AMP from adenine: step 1/1. Catalyzes a salvage reaction resulting in the formation of AMP, that is energically less costly than de novo synthesis. This chain is Adenine phosphoribosyltransferase, found in Shewanella sp. (strain MR-7).